Consider the following 593-residue polypeptide: MHRELKEFSHPHGSTGIYEDNLQVDVLIVGAGFSGIYMLHELRKQGLKTVVYEAGSDLGGTWRFNCYPGARVDSQVPLYQFSIPETYKDWTWSTNYPDYKELRAYFDHVDKVLDIKKDVAFGSVVVDAQFDTSQSRWVVKTQDGRTAYAKYFIAAAGVSSKRYIPEWEGIENFKGPIHHTSFWPEHEVDVRGKRAAIIGTGASGVQVTQAWGPQAGHLKVFLRSPNYSIPMRRKELTADEQNQLKPIYPQLFDLREKTFTGALVDFSERSALEDSEAEREAFYEQRYQTGGFDFSTANYKDTMLNPVANRYLYDFWAKKTRARLNDERVKDLLAPVEPPYFFGGKRSSLETDFYEQFNRDTVELVDAKSNPIVGFTENGIKMQDGTVHEVDVVCLATGFDTTTGSMINLGVRSIHGTTLQEDWSQAAETYLGLTVSGYPNLFHLYGTHAPTLFSQAVTTIEVQGRWIVDAIKQMERQAIRSINPSREAAHAWKLQIRAFQNASFFPTVHSTYMGGSIPGKPFELVSYPAGMPMYARQIRDALPTFPGFEVVKADGEKVENLAPGGLEATTNFFERLFGMPPSSAKEDLAKQDH.

Residues 61–64 (TWRF), 73–74 (DS), and Tyr-79 each bind FAD. 71-73 (RVD) serves as a coordination point for NADP(+). Residues 200–206 (TGASGVQ) and 223–224 (RS) contribute to the NADP(+) site.

Belongs to the FAD-binding monooxygenase family. FAD serves as cofactor.

It participates in secondary metabolite biosynthesis. Its function is as follows. FAD-binding monooxygenase; part of the cluster that mediates the biosynthesis of acurin A, a highly reduced polyketide coupled to a serine via a peptide bond. The activities of the highly reducing polyketide synthase acrA and the nonribosomal peptide synthetase acrB are collectively responsible for the synthesis of the acurin A core structure with a heptaketide backbone produced by acrA covalently fused to a L-serine by acrB. After the formation of the PK-NRP hybrid product, it is detached from acrB by reductive release to set up the formation of the lactam ring by aldol condensation. The hydrolyase acrC then catalyzes water loss to generate a double bond in the ring. This double bond is probably reduced, which is followed by three oxidations at C-22 to generate the carboxylic acid moiety, involving probably the FAD-binding monooxygenase acrE and the cytochrome P450 monooxygenases acrD and acrF. Finally, a last methylation step performed by the O-methyltransferase acrG leads to the production of acurin A. The polypeptide is FAD-binding monooxygenase acrE (Aspergillus aculeatus (strain ATCC 16872 / CBS 172.66 / WB 5094)).